Here is a 589-residue protein sequence, read N- to C-terminus: MERKSSLKVRVQKLGTSLSNMVMPNIGAFIAWGVAASLFIATGYLPNKALDTNVVGPMLKYVLPLLIGYTGGYNIHKQRGGVIGAIASFGAIAGSTVTMFIGAMIMGPLSAWILKKFDEKVQPKIRTGFEMLVNNFSLGLIGFALMVLAFFVIGPVVAQLTEWVGIGVEAIVKVHLLPLANLIIEPAKILFLNNALNHGIFTPLGTEQVAKVGKSVLFLLEANPGPGLGVLIAYAMFGKGSAKSSSWGAMIIHFFGGIHEIYFPYVMMKPAMFLAVIAGGLTGTFTFQTLGAGLTAPASPGSIIAIMGMSPKGWGPHLVVLAGVFAAAVASFLVASIILKSDNSDDDSLETAQAVTQAAKAESKGQAVTEPNLHSDITTDNIHQIIFACDAGMGSSAMGASILRDKVKKAGLDISVSNQAISNLQDTANTLIVTQEELADRAGQKTPRAVHVAVDNFLATSKYDDIIASLTNGKASGSENAAHSTQADSAEIDLNQIDAVVFAYGIAKGSATMGQETLRSIFKQNNVKIPVSTASYAHLSDYNAKNILLVTTIAQQGQAQQAAPNAQILVVDSLVTTPEYDKLVARMHK.

Residues 1–25 lie on the Cytoplasmic side of the membrane; the sequence is MERKSSLKVRVQKLGTSLSNMVMPN. The PTS EIIC type-2 domain maps to 14 to 347; sequence LGTSLSNMVM…ILKSDNSDDD (334 aa). A helical membrane pass occupies residues 26–47; sequence IGAFIAWGVAASLFIATGYLPN. Over 48–51 the chain is Extracellular; it reads KALD. A helical transmembrane segment spans residues 52–73; the sequence is TNVVGPMLKYVLPLLIGYTGGY. Topologically, residues 74 to 136 are cytoplasmic; it reads NIHKQRGGVI…TGFEMLVNNF (63 aa). The helical transmembrane segment at 137–158 threads the bilayer; sequence SLGLIGFALMVLAFFVIGPVVA. At 159–167 the chain is on the extracellular side; sequence QLTEWVGIG. Residues 168-188 traverse the membrane as a helical segment; the sequence is VEAIVKVHLLPLANLIIEPAK. Over 189-275 the chain is Cytoplasmic; the sequence is ILFLNNALNH…VMMKPAMFLA (87 aa). The helical transmembrane segment at 276–295 threads the bilayer; it reads VIAGGLTGTFTFQTLGAGLT. The Extracellular segment spans residues 296-317; that stretch reads APASPGSIIAIMGMSPKGWGPH. A helical transmembrane segment spans residues 318–339; that stretch reads LVVLAGVFAAAVASFLVASIIL. Residues 340-589 lie on the Cytoplasmic side of the membrane; the sequence is KSDNSDDDSL…YDKLVARMHK (250 aa). Residues 383-478 enclose the PTS EIIB type-2 domain; sequence HQIIFACDAG…SLTNGKASGS (96 aa). The active-site Phosphocysteine intermediate; for EIIB activity is the cysteine 389. Phosphocysteine; by EIIA is present on cysteine 389.

In terms of assembly, homodimer.

It is found in the cell membrane. It carries out the reaction D-mannitol(out) + N(pros)-phospho-L-histidyl-[protein] = D-mannitol 1-phosphate(in) + L-histidyl-[protein]. Its function is as follows. The phosphoenolpyruvate-dependent sugar phosphotransferase system (sugar PTS), a major carbohydrate active transport system, catalyzes the phosphorylation of incoming sugar substrates concomitantly with their translocation across the cell membrane. The enzyme II CmtAB PTS system is involved in D-mannitol transport. The protein is PTS system mannitol-specific EIICB component of Streptococcus mutans serotype c (strain ATCC 700610 / UA159).